Here is a 252-residue protein sequence, read N- to C-terminus: Probable endonuclease 4 (252 aa).

Residues His56, His96, Glu129, Asp162, His165, His191, Asp204, His206, and Glu233 each contribute to the Zn(2+) site.

This sequence belongs to the AP endonuclease 2 family. Zn(2+) serves as cofactor.

The catalysed reaction is Endonucleolytic cleavage to 5'-phosphooligonucleotide end-products.. Its function is as follows. Endonuclease IV plays a role in DNA repair. It cleaves phosphodiester bonds at apurinic or apyrimidinic (AP) sites, generating a 3'-hydroxyl group and a 5'-terminal sugar phosphate. The sequence is that of Probable endonuclease 4 from Mycobacterium marinum (strain ATCC BAA-535 / M).